A 388-amino-acid polypeptide reads, in one-letter code: Chalcone synthase D (388 aa).

Cys164 is a catalytic residue.

The protein belongs to the thiolase-like superfamily. Chalcone/stilbene synthases family.

The enzyme catalyses (E)-4-coumaroyl-CoA + 3 malonyl-CoA + 3 H(+) = 2',4,4',6'-tetrahydroxychalcone + 3 CO2 + 4 CoA. It functions in the pathway secondary metabolite biosynthesis; flavonoid biosynthesis. The primary product of this enzyme is 4,2',4',6'-tetrahydroxychalcone (also termed naringenin-chalcone or chalcone) which can under specific conditions spontaneously isomerize into naringenin. The protein is Chalcone synthase D (CHSD) of Ipomoea nil (Japanese morning glory).